Reading from the N-terminus, the 1048-residue chain is Protein argonaute 7 (1048 aa).

Residues 1–14 (MEGEREGVVAKNED) are compositionally biased toward basic and acidic residues. 2 disordered regions span residues 1-50 (MEGE…GSSG) and 121-141 (KAADAAPRGSMWKHRPSKKPP). Over residues 16-37 (AGGGGGGLGTGGNGGGGGGGSA) the composition is skewed to gly residues. A compositionally biased stretch (basic residues) spans 131 to 141 (MWKHRPSKKPP). The PAZ domain occupies 422-530 (KRCDFLKDLP…VPMELCVVCE (109 aa)). One can recognise a Piwi domain in the interval 709 to 1017 (LLICVMERRH…AAYRGRLYLE (309 aa)).

This sequence belongs to the argonaute family. Ago subfamily. As to expression, expressed in the reproductive shoot apex.

Functionally, involved in the RNA silencing pathway. May bind to short RNAs such as microRNAs (miRNAs) or short interfering RNAs (siRNAs), and represses the translation of mRNAs which are complementary to them. Regulates shoot apical meristem (SAM) initiation and maintenance and leaf polarization through the trans-acting siRNAS (ta-siRNAs) pathway which probably modulates the expression of the ARF2, ARF3, ARF4, ARF14 and ARF15 genes. This chain is Protein argonaute 7 (AGO7), found in Oryza sativa subsp. japonica (Rice).